The chain runs to 331 residues: Major outer membrane protein P.IB (331 aa).

The signal sequence occupies residues Met-1 to Ala-19.

This sequence belongs to the Gram-negative porin family. In terms of assembly, homotrimer.

The protein localises to the cell outer membrane. Its function is as follows. Serves as a slightly cation selective porin. This is Major outer membrane protein P.IB (porB) from Neisseria meningitidis serogroup B (strain ATCC BAA-335 / MC58).